We begin with the raw amino-acid sequence, 88 residues long: UPF0297 protein SPCG_0205 (88 aa).

It belongs to the UPF0297 family.

This is UPF0297 protein SPCG_0205 from Streptococcus pneumoniae (strain CGSP14).